The primary structure comprises 338 residues: Rho GTPase-activating protein gacA (338 aa).

One can recognise a Rho-GAP domain in the interval 149-327 (NTLEHVEDEG…NVLSHKVAVH (179 aa)).

It is found in the cytoplasm. In terms of biological role, rho GTPase-activating protein involved in the signal transduction pathway. The protein is Rho GTPase-activating protein gacA (gacA) of Dictyostelium discoideum (Social amoeba).